Consider the following 359-residue polypeptide: Peptide chain release factor 1 (359 aa).

Position 233 is an N5-methylglutamine (Gln233).

Belongs to the prokaryotic/mitochondrial release factor family. Methylated by PrmC. Methylation increases the termination efficiency of RF1.

The protein resides in the cytoplasm. Its function is as follows. Peptide chain release factor 1 directs the termination of translation in response to the peptide chain termination codons UAG and UAA. This is Peptide chain release factor 1 from Clostridium acetobutylicum (strain ATCC 824 / DSM 792 / JCM 1419 / IAM 19013 / LMG 5710 / NBRC 13948 / NRRL B-527 / VKM B-1787 / 2291 / W).